The chain runs to 109 residues: Phosphoribosyl-ATP pyrophosphatase (109 aa).

The protein belongs to the PRA-PH family.

The protein resides in the cytoplasm. The catalysed reaction is 1-(5-phospho-beta-D-ribosyl)-ATP + H2O = 1-(5-phospho-beta-D-ribosyl)-5'-AMP + diphosphate + H(+). The protein operates within amino-acid biosynthesis; L-histidine biosynthesis; L-histidine from 5-phospho-alpha-D-ribose 1-diphosphate: step 2/9. The protein is Phosphoribosyl-ATP pyrophosphatase of Parvibaculum lavamentivorans (strain DS-1 / DSM 13023 / NCIMB 13966).